We begin with the raw amino-acid sequence, 142 residues long: Mitochondrial import receptor subunit TOM22 homolog (142 aa).

Residues 1–11 (MAAAVAAAGAG) are compositionally biased toward low complexity. A disordered region spans residues 1 to 42 (MAAAVAAAGAGEPQSPDELLPKGDAEKPEEELEEDDDEELDE). Residue A2 is modified to N-acetylalanine. The Cytoplasmic portion of the chain corresponds to 2–83 (AAAVAAAGAG…AQKMYRFSRA (82 aa)). A Phosphoserine modification is found at S15. Over residues 27–42 (KPEEELEEDDDEELDE) the composition is skewed to acidic residues. An import sequence; necessary for mitochondrion outer membrane localization and integration in the TOM complex region spans residues 41 to 50 (DETLSERLWG). At T43 the chain carries Phosphothreonine. S45 bears the Phosphoserine mark. The TMD; necessary for mitochondrion outer membrane localization and integration in the TOM complex stretch occupies residues 83-103 (AALWIGTTSFMILVLPVVFET). Residues 84-103 (ALWIGTTSFMILVLPVVFET) traverse the membrane as a helical segment. The Mitochondrial intermembrane segment spans residues 104 to 142 (EKLQMEQQQQLQQRQILLGPNTGLSGGMPGALPSLPGKI). A C-tail signal; necessary for mitochondrion outer membrane localization and integration in the TOM complex region spans residues 123–142 (PNTGLSGGMPGALPSLPGKI).

It belongs to the Tom22 family. Forms part of the preprotein translocase complex of the outer mitochondrial membrane (TOM complex) which consists of at least 7 different proteins (TOMM5, TOMM6, TOMM7, TOMM20, TOMM22, TOMM40 and TOMM70). Interacts with TOMM40. Interacts with PPP2R2B. Ubiquitous.

The protein localises to the mitochondrion outer membrane. Functionally, central receptor component of the translocase of the outer membrane of mitochondria (TOM complex) responsible for the recognition and translocation of cytosolically synthesized mitochondrial preproteins. Together with the peripheral receptor TOM20 functions as the transit peptide receptor and facilitates the movement of preproteins into the translocation pore. Required for the translocation across the mitochondrial outer membrane of cytochrome P450 monooxygenases. The protein is Mitochondrial import receptor subunit TOM22 homolog (TOMM22) of Homo sapiens (Human).